A 1030-amino-acid chain; its full sequence is Alpha-L-rhamnosidase (1030 aa).

Residues 133 to 297 (PSLEGSSWIW…GAGPWGRVAP (165 aa)) are carbohydrate-binding module-67 (CBM67). The Ca(2+) site is built by Asp179 and Asn180. Residues 179–180 (DN) and Trp203 contribute to the alpha-L-rhamnose site. Ca(2+)-binding residues include Asn228 and Pro233. Residues Asp630, 634 to 636 (RDE), Asp643, and Trp695 contribute to the alpha-L-rhamnose site. The Proton donor role is filled by Glu636. Residue Glu895 is the Proton acceptor of the active site. His916 provides a ligand contact to alpha-L-rhamnose.

This sequence belongs to the glycosyl hydrolase 78 family.

The enzyme catalyses Hydrolysis of terminal non-reducing alpha-L-rhamnose residues in alpha-L-rhamnosides.. Its function is as follows. Alpha-L-rhamnosidase which is able to degrade p-nitrophenyl-alpha-L-rhamnopyranoside (PNP-Rha) in vitro. Releases L-rhamnose from citrus flavonoids such as naringin, rutin and hesperidin, and the arabinogalactan-protein (AGP) gum arabic. AGPs are a family of proteoglycans that are localized on the cell surfaces of higher plants. Cleaves both the alpha-1,6 and the alpha-1,2-linked rhamnosyl residues. This is Alpha-L-rhamnosidase from Streptomyces avermitilis (strain ATCC 31267 / DSM 46492 / JCM 5070 / NBRC 14893 / NCIMB 12804 / NRRL 8165 / MA-4680).